We begin with the raw amino-acid sequence, 145 residues long: Holo-[acyl-carrier-protein] synthase (145 aa).

2 residues coordinate Mg(2+): D8 and E59.

Belongs to the P-Pant transferase superfamily. AcpS family. Requires Mg(2+) as cofactor.

The protein localises to the cytoplasm. It carries out the reaction apo-[ACP] + CoA = holo-[ACP] + adenosine 3',5'-bisphosphate + H(+). Functionally, transfers the 4'-phosphopantetheine moiety from coenzyme A to a Ser of acyl-carrier-protein. This chain is Holo-[acyl-carrier-protein] synthase, found in Granulibacter bethesdensis (strain ATCC BAA-1260 / CGDNIH1).